A 294-amino-acid polypeptide reads, in one-letter code: 4-hydroxy-tetrahydrodipicolinate synthase (294 aa).

Residue Thr-47 participates in pyruvate binding. The active-site Proton donor/acceptor is the Tyr-135. Catalysis depends on Lys-163, which acts as the Schiff-base intermediate with substrate. Ile-205 is a binding site for pyruvate.

This sequence belongs to the DapA family. In terms of assembly, homotetramer; dimer of dimers.

It localises to the cytoplasm. It catalyses the reaction L-aspartate 4-semialdehyde + pyruvate = (2S,4S)-4-hydroxy-2,3,4,5-tetrahydrodipicolinate + H2O + H(+). The protein operates within amino-acid biosynthesis; L-lysine biosynthesis via DAP pathway; (S)-tetrahydrodipicolinate from L-aspartate: step 3/4. Its function is as follows. Catalyzes the condensation of (S)-aspartate-beta-semialdehyde [(S)-ASA] and pyruvate to 4-hydroxy-tetrahydrodipicolinate (HTPA). In Rickettsia typhi (strain ATCC VR-144 / Wilmington), this protein is 4-hydroxy-tetrahydrodipicolinate synthase.